A 286-amino-acid chain; its full sequence is Homeobox-leucine zipper protein ATHB-20 (286 aa).

The homeobox DNA-binding region spans leucine 84–glutamine 143. Residues leucine 144–leucine 179 form a leucine-zipper region.

The protein belongs to the HD-ZIP homeobox family. Class I subfamily. As to expression, widely expressed.

Its subcellular location is the nucleus. Functionally, probable transcription factor. This is Homeobox-leucine zipper protein ATHB-20 (ATHB-20) from Arabidopsis thaliana (Mouse-ear cress).